The primary structure comprises 817 residues: Lon protease (817 aa).

A Lon N-terminal domain is found at 22–216 (VPIMPLSDGV…KVTRQLNHQL (195 aa)). Residue 368 to 375 (GPPGTGKT) coordinates ATP. Residues 604-785 (ALTPGVVMGL…GDVLELALNG (182 aa)) form the Lon proteolytic domain. Catalysis depends on residues Ser-691 and Lys-734. The segment at 784 to 817 (NGNGATKKKKKTPAKSKKSTKPAAKKTAARKSRK) is disordered. The span at 789-817 (TKKKKKTPAKSKKSTKPAAKKTAARKSRK) shows a compositional bias: basic residues.

Belongs to the peptidase S16 family. In terms of assembly, homohexamer. Organized in a ring with a central cavity.

It is found in the cytoplasm. The enzyme catalyses Hydrolysis of proteins in presence of ATP.. Its function is as follows. ATP-dependent serine protease that mediates the selective degradation of mutant and abnormal proteins as well as certain short-lived regulatory proteins. Required for cellular homeostasis and for survival from DNA damage and developmental changes induced by stress. Degrades polypeptides processively to yield small peptide fragments that are 5 to 10 amino acids long. Binds to DNA in a double-stranded, site-specific manner. This Desulfosudis oleivorans (strain DSM 6200 / JCM 39069 / Hxd3) (Desulfococcus oleovorans) protein is Lon protease.